Here is a 217-residue protein sequence, read N- to C-terminus: Protein-L-isoaspartate O-methyltransferase (217 aa).

Ser-62 is an active-site residue.

This sequence belongs to the methyltransferase superfamily. L-isoaspartyl/D-aspartyl protein methyltransferase family.

It is found in the cytoplasm. The enzyme catalyses [protein]-L-isoaspartate + S-adenosyl-L-methionine = [protein]-L-isoaspartate alpha-methyl ester + S-adenosyl-L-homocysteine. Its function is as follows. Catalyzes the methyl esterification of L-isoaspartyl residues in peptides and proteins that result from spontaneous decomposition of normal L-aspartyl and L-asparaginyl residues. It plays a role in the repair and/or degradation of damaged proteins. The chain is Protein-L-isoaspartate O-methyltransferase from Trichlorobacter lovleyi (strain ATCC BAA-1151 / DSM 17278 / SZ) (Geobacter lovleyi).